Here is a 599-residue protein sequence, read N- to C-terminus: Proteasome-associated ATPase (599 aa).

The tract at residues 1 to 22 (MPHGHPGSQPDEGGELSNGSSS) is disordered. The stretch at 21 to 97 (SSGELTAQIR…LREEVDRLAQ (77 aa)) forms a coiled coil. Position 286 to 291 (286 to 291 (GCGKTL)) interacts with ATP. The interval 598-599 (YL) is docks into pockets in the proteasome alpha-ring.

This sequence belongs to the AAA ATPase family. Homohexamer. Assembles into a hexameric ring structure that caps the 20S proteasome core. Strongly interacts with the prokaryotic ubiquitin-like protein Pup through a hydrophobic interface; the interacting region of ARC lies in its N-terminal coiled-coil domain. There is one Pup binding site per ARC hexamer ring. Upon ATP-binding, the C-terminus of ARC interacts with the alpha-rings of the proteasome core, possibly by binding to the intersubunit pockets.

It participates in protein degradation; proteasomal Pup-dependent pathway. Functionally, ATPase which is responsible for recognizing, binding, unfolding and translocation of pupylated proteins into the bacterial 20S proteasome core particle. May be essential for opening the gate of the 20S proteasome via an interaction with its C-terminus, thereby allowing substrate entry and access to the site of proteolysis. Thus, the C-termini of the proteasomal ATPase may function like a 'key in a lock' to induce gate opening and therefore regulate proteolysis. The polypeptide is Proteasome-associated ATPase (Actinosynnema mirum (strain ATCC 29888 / DSM 43827 / JCM 3225 / NBRC 14064 / NCIMB 13271 / NRRL B-12336 / IMRU 3971 / 101)).